Reading from the N-terminus, the 496-residue chain is Cytosol aminopeptidase (496 aa).

Mn(2+) contacts are provided by Lys-258 and Asp-263. Residue Lys-270 is part of the active site. Mn(2+)-binding residues include Asp-281, Asp-340, and Glu-342. Arg-344 is an active-site residue.

Belongs to the peptidase M17 family. Mn(2+) is required as a cofactor.

Its subcellular location is the cytoplasm. The catalysed reaction is Release of an N-terminal amino acid, Xaa-|-Yaa-, in which Xaa is preferably Leu, but may be other amino acids including Pro although not Arg or Lys, and Yaa may be Pro. Amino acid amides and methyl esters are also readily hydrolyzed, but rates on arylamides are exceedingly low.. It catalyses the reaction Release of an N-terminal amino acid, preferentially leucine, but not glutamic or aspartic acids.. Functionally, presumably involved in the processing and regular turnover of intracellular proteins. Catalyzes the removal of unsubstituted N-terminal amino acids from various peptides. This chain is Cytosol aminopeptidase (pepA), found in Helicobacter pylori (strain J99 / ATCC 700824) (Campylobacter pylori J99).